Here is a 354-residue protein sequence, read N- to C-terminus: MGKLVALTLLGACLALIGERLLNFRERVSTTREIKATEPQNCHLIEGLENGSEDIDILPSGLAFISTGLKYPGMPAFAPDKPGRIFLMDLNEQNPEAQALEISGGLDQESLNPHGISTFIDKDNTAYLYVVNHPNMDSTVEIFKFEEQQRSLIHLKTLKHELLKSVNDIVVLGPEQFYATRDHYFTSYFLVLLEMILDPHWTSVVFYSPKEVKVVAQGFSSANGITVSLDQKFVYVADVTAKNIHIMKKHDNWDLTPVKVIQLGTLVDNLTVDPATGDILAGCHPNPMKLLIYNPEDPPGSEVLRIQDSLSDKPRVSTLYANNGSVLQGSTVASVYHKRMLIGTIFHKALYCDL.

The cysteines at positions 42 and 352 are disulfide-linked. A glycan (N-linked (GlcNAc...) asparagine) is linked at asparagine 50. Residues glutamate 53 and aspartate 54 each contribute to the Ca(2+) site. Histidine 114 functions as the Proton acceptor in the catalytic mechanism. Residue isoleucine 116 coordinates Ca(2+). Residue serine 165 is modified to Phosphoserine. Positions 167, 168, 223, 268, and 269 each coordinate Ca(2+). N-linked (GlcNAc...) asparagine glycans are attached at residues asparagine 269 and asparagine 323.

It belongs to the paraoxonase family. In terms of assembly, homodimer. Ca(2+) serves as cofactor. Post-translationally, glycosylated. The signal sequence is not cleaved.

The protein localises to the secreted. It is found in the extracellular space. The enzyme catalyses a phenyl acetate + H2O = a phenol + acetate + H(+). It carries out the reaction An aryl dialkyl phosphate + H2O = dialkyl phosphate + an aryl alcohol.. The catalysed reaction is an N-acyl-L-homoserine lactone + H2O = an N-acyl-L-homoserine + H(+). Has low activity towards the organophosphate paraxon and aromatic carboxylic acid esters. Rapidly hydrolyzes lactones such as statin prodrugs (e.g. lovastatin). Hydrolyzes aromatic lactones and 5- or 6-member ring lactones with aliphatic substituents but not simple lactones or those with polar substituents. This Mus musculus (Mouse) protein is Serum paraoxonase/lactonase 3 (Pon3).